The sequence spans 97 residues: Class II hydrophobin 1 (97 aa).

An N-terminal signal peptide occupies residues 1–16 (MKFFAIAALFAAAAVA). Positions 17-22 (QPLEDR) are excised as a propeptide. 4 disulfides stabilise this stretch: Cys-30–Cys-79, Cys-40–Cys-70, Cys-41–Cys-53, and Cys-80–Cys-91.

The protein belongs to the cerato-ulmin hydrophobin family. In terms of assembly, homotetramer. Further self-assembles to form highly ordered films at water-air interfaces through intermolecular interactions.

The protein localises to the secreted. Its subcellular location is the cell wall. Its function is as follows. Aerial growth, conidiation, and dispersal of filamentous fungi in the environment rely upon a capability of their secreting small amphipathic proteins called hydrophobins (HPBs) with low sequence identity. Class I can self-assemble into an outermost layer of rodlet bundles on aerial cell surfaces, conferring cellular hydrophobicity that supports fungal growth, development and dispersal; whereas Class II form highly ordered films at water-air interfaces through intermolecular interactions but contribute nothing to the rodlet structure. Hbf1 is a class II hydrophobin that has a role in hyphal development and is in particular required for the formation of aerial hyphae. In Hypocrea jecorina (Trichoderma reesei), this protein is Class II hydrophobin 1.